We begin with the raw amino-acid sequence, 506 residues long: ATP synthase subunit alpha, chloroplastic (506 aa).

170–177 (GDRQTGKT) provides a ligand contact to ATP.

It belongs to the ATPase alpha/beta chains family. F-type ATPases have 2 components, CF(1) - the catalytic core - and CF(0) - the membrane proton channel. CF(1) has five subunits: alpha(3), beta(3), gamma(1), delta(1), epsilon(1). CF(0) has four main subunits: a, b, b' and c.

The protein localises to the plastid. The protein resides in the chloroplast thylakoid membrane. It catalyses the reaction ATP + H2O + 4 H(+)(in) = ADP + phosphate + 5 H(+)(out). In terms of biological role, produces ATP from ADP in the presence of a proton gradient across the membrane. The alpha chain is a regulatory subunit. The sequence is that of ATP synthase subunit alpha, chloroplastic from Euglena gracilis.